Consider the following 385-residue polypeptide: Mannitol-1-phosphate 5-dehydrogenase (385 aa).

Residue 3-14 (ALQFGAGNIGRG) coordinates NAD(+).

This sequence belongs to the mannitol dehydrogenase family.

It carries out the reaction D-mannitol 1-phosphate + NAD(+) = beta-D-fructose 6-phosphate + NADH + H(+). The chain is Mannitol-1-phosphate 5-dehydrogenase (mtlD) from Buchnera aphidicola subsp. Acyrthosiphon pisum (strain APS) (Acyrthosiphon pisum symbiotic bacterium).